The primary structure comprises 127 residues: PanD regulatory factor (127 aa).

Positions 1–127 (MKLTIIRLEK…TAQQGGWEKC (127 aa)) constitute an N-acetyltransferase domain. 2 interaction with PanD regions span residues 43-48 (RFNERL) and 66-76 (LRVREVTRRRG). Residues 66 to 68 (LRV) and 72 to 79 (TRRRGVGQ) contribute to the CoA site.

It belongs to the PanZ/PanM family. Interacts with PanD in the presence of CoA. Forms a heterooctameric complex composed of four PanD subunits and four PanZ subunits. Monomer in solution.

With respect to regulation, activation of PanD processing occurs even at low CoA concentrations. In contrast, full inhibition of PanD catalytic activity only occurs at sufficiently high CoA concentrations. Its function is as follows. Controls both the activation and catalytic activity of PanD in a coenzyme A (CoA)-dependent fashion. Binding of CoA or a derivative to PanZ leads to interaction with PanD, which promotes the processing and activation of pro-PanD, and subsequent substrate-mediated inhibition of the active form of PanD. Inhibition of PanD activity is probably the primary metabolic role of PanZ, allowing negative feedback regulation of pantothenate biosynthesis by CoA. In Escherichia coli (strain K12), this protein is PanD regulatory factor.